We begin with the raw amino-acid sequence, 66 residues long: Nigrocin-2ISa (66 aa).

The first 22 residues, 1 to 22 (MFTLKKSMLLLFFLGTINLSLC), serve as a signal peptide directing secretion. Residues 23–43 (QEERDAEEERRDEDNAKMEEI) constitute a propeptide, removed in mature form. Cysteine 60 and cysteine 66 form a disulfide bridge.

In terms of tissue distribution, expressed by the skin glands.

It localises to the secreted. In terms of biological role, has antimicrobial activity against Gram-negative bacterium E.coli ATCC 8739 (MIC=25 ug), against Gram positive bacteria S.aureus ATCC 6538 (MIC=3.1 ug), methicillin-resistant S.aureus ATCC 43300 (MIC=12.5 ug), B.subtilis ATCC 6633 (MIC=12.5 ug) and against fungus C.albicans ATCC 90028 (MIC=50 ug). The protein is Nigrocin-2ISa of Odorrana ishikawae (Ishikawa's frog).